The following is a 125-amino-acid chain: Large ribosomal subunit protein bL12 (125 aa).

This sequence belongs to the bacterial ribosomal protein bL12 family. Homodimer. Part of the ribosomal stalk of the 50S ribosomal subunit. Forms a multimeric L10(L12)X complex, where L10 forms an elongated spine to which 2 to 4 L12 dimers bind in a sequential fashion. Binds GTP-bound translation factors.

Functionally, forms part of the ribosomal stalk which helps the ribosome interact with GTP-bound translation factors. Is thus essential for accurate translation. This chain is Large ribosomal subunit protein bL12, found in Methylobacterium radiotolerans (strain ATCC 27329 / DSM 1819 / JCM 2831 / NBRC 15690 / NCIMB 10815 / 0-1).